A 603-amino-acid polypeptide reads, in one-letter code: Elongation factor 4 (603 aa).

Residues 6–188 (SKIRNFCIIA…QIVKKIPAPT (183 aa)) enclose the tr-type G domain. GTP contacts are provided by residues 18-23 (DHGKST) and 135-138 (NKVD).

The protein belongs to the TRAFAC class translation factor GTPase superfamily. Classic translation factor GTPase family. LepA subfamily.

The protein localises to the cell membrane. It carries out the reaction GTP + H2O = GDP + phosphate + H(+). Required for accurate and efficient protein synthesis under certain stress conditions. May act as a fidelity factor of the translation reaction, by catalyzing a one-codon backward translocation of tRNAs on improperly translocated ribosomes. Back-translocation proceeds from a post-translocation (POST) complex to a pre-translocation (PRE) complex, thus giving elongation factor G a second chance to translocate the tRNAs correctly. Binds to ribosomes in a GTP-dependent manner. The sequence is that of Elongation factor 4 from Agathobacter rectalis (strain ATCC 33656 / DSM 3377 / JCM 17463 / KCTC 5835 / VPI 0990) (Eubacterium rectale).